The sequence spans 153 residues: Probable histone H2A.4 (153 aa).

Basic residues predominate over residues 1 to 12; sequence MDSGTKVKKGAA. Disordered stretches follow at residues 1–30 and 129–153; these read MDSG…RSVK and KSEK…PKKS. Positions 133-147 are enriched in low complexity; the sequence is AASTTKTPKSPSKAT. The short motif at 149–152 is the SPKK motif element; the sequence is SPKK.

It belongs to the histone H2A family. The nucleosome is a histone octamer containing two molecules each of H2A, H2B, H3 and H4 assembled in one H3-H4 heterotetramer and two H2A-H2B heterodimers. The octamer wraps approximately 147 bp of DNA. Not ubiquitinated.

The protein resides in the nucleus. It localises to the chromosome. Its function is as follows. Core component of nucleosome. Nucleosomes wrap and compact DNA into chromatin, limiting DNA accessibility to the cellular machineries which require DNA as a template. Histones thereby play a central role in transcription regulation, DNA repair, DNA replication and chromosomal stability. DNA accessibility is regulated via a complex set of post-translational modifications of histones, also called histone code, and nucleosome remodeling. The sequence is that of Probable histone H2A.4 from Arabidopsis thaliana (Mouse-ear cress).